The chain runs to 353 residues: uncharacterized protein (353 aa).

Positions 1-24 (MRVVERAVIACYLGITIFSGIAFG) are cleaved as a signal peptide.

It belongs to the chlamydial CPn_1058/CT_355/TC_0634 family.

This is an uncharacterized protein from Chlamydia trachomatis serovar D (strain ATCC VR-885 / DSM 19411 / UW-3/Cx).